The primary structure comprises 544 residues: Glucans biosynthesis protein G 1 (544 aa).

Positions 1 to 33 (MVSLLRCQSFKPSSIICSLALSAAFALSGTAFA) are cleaved as a signal peptide. The disordered stretch occupies residues 36-58 (SKPAENKPATPVVSPPKATAPSA).

Belongs to the OpgD/OpgG family.

The protein resides in the periplasm. The protein operates within glycan metabolism; osmoregulated periplasmic glucan (OPG) biosynthesis. In terms of biological role, involved in the biosynthesis of osmoregulated periplasmic glucans (OPGs). The polypeptide is Glucans biosynthesis protein G 1 (opgG1) (Shewanella oneidensis (strain ATCC 700550 / JCM 31522 / CIP 106686 / LMG 19005 / NCIMB 14063 / MR-1)).